Consider the following 162-residue polypeptide: Phosphopantetheine adenylyltransferase (162 aa).

S9 is a binding site for substrate. ATP is bound by residues 9 to 10 (SF) and H17. Positions 41, 77, and 91 each coordinate substrate. Residues 92-94 (GLR), E102, and 126-132 (YAFLSSS) contribute to the ATP site.

The protein belongs to the bacterial CoaD family. As to quaternary structure, homohexamer. The cofactor is Mg(2+).

It is found in the cytoplasm. The enzyme catalyses (R)-4'-phosphopantetheine + ATP + H(+) = 3'-dephospho-CoA + diphosphate. The protein operates within cofactor biosynthesis; coenzyme A biosynthesis; CoA from (R)-pantothenate: step 4/5. Its function is as follows. Reversibly transfers an adenylyl group from ATP to 4'-phosphopantetheine, yielding dephospho-CoA (dPCoA) and pyrophosphate. The chain is Phosphopantetheine adenylyltransferase from Frankia casuarinae (strain DSM 45818 / CECT 9043 / HFP020203 / CcI3).